A 1578-amino-acid polypeptide reads, in one-letter code: Mediator of RNA polymerase II transcription subunit 14 (1578 aa).

Positions 49–53 match the LXXLL motif 1 motif; that stretch reads LAELL. A disordered region spans residues 561–582; the sequence is SQSVTAGGTSQSSAPSAATTES. The span at 565-580 shows a compositional bias: low complexity; that stretch reads TAGGTSQSSAPSAATT. Positions 739–743 match the LXXLL motif 2 motif; that stretch reads LKRLL. 2 disordered regions span residues 1009–1173 and 1510–1578; these read RRRS…PDHK and APGG…GGPN. A compositionally biased stretch (polar residues) spans 1084 to 1093; that stretch reads SQSHPNFNMT. 2 stretches are compositionally biased toward pro residues: residues 1095–1104 and 1157–1167; these read PPAPHMPHPS and PGMPRPSPRPG. Gly residues-rich tracts occupy residues 1510–1521 and 1547–1578; these read APGGPGGPGPMG and MGGG…GGPN.

It belongs to the Mediator complex subunit 14 family. As to quaternary structure, component of the Mediator complex.

It is found in the nucleus. Its function is as follows. Component of the Mediator complex, a coactivator involved in the regulated transcription of nearly all RNA polymerase II-dependent genes. Mediator functions as a bridge to convey information from gene-specific regulatory proteins to the basal RNA polymerase II transcription machinery. Mediator is recruited to promoters by direct interactions with regulatory proteins and serves as a scaffold for the assembly of a functional preinitiation complex with RNA polymerase II and the general transcription factors. This is Mediator of RNA polymerase II transcription subunit 14 (MED14) from Aedes aegypti (Yellowfever mosquito).